A 218-amino-acid polypeptide reads, in one-letter code: Lactosylceramide 4-alpha-galactosyltransferase (218 aa).

Residues 57–59 (DTD) carry the DXD motif motif.

It belongs to the glycosyltransferase 32 family.

It localises to the golgi apparatus membrane. It catalyses the reaction a beta-D-Gal-(1-&gt;4)-beta-D-Glc-(1&lt;-&gt;1)-Cer(d18:1(4E)) + UDP-alpha-D-galactose = a globoside Gb3Cer (d18:1(4E)) + UDP + H(+). The enzyme catalyses a beta-D-Gal-(1&lt;-&gt;1')-ceramide + UDP-alpha-D-galactose = alpha-D-Gal-(1-&gt;4)-beta-D-Gal-(1&lt;-&gt;1')-Cer + UDP + H(+). It functions in the pathway glycolipid biosynthesis. Functionally, catalyzes the transfer of galactose from UDP-alpha-D-galactose to lactosylceramide/beta-D-galactosyl-(1-&gt;4)-beta-D-glucosyl-(1&lt;-&gt;1)-ceramide(d18:1(4E)) to produce globotriaosylceramide/globoside Gb3Cer (d18:1(4E)). Also able to transfer galactose to galactosylceramide/beta-D-Gal-(1&lt;-&gt;1')-Cer. Globoside Gb3Cer is a glycosphingolipid of the globo serie, one of the major types of neutral root structures of glycosphingolipids, that constitute a significant portion of mammalian cell membranes. This Pongo pygmaeus (Bornean orangutan) protein is Lactosylceramide 4-alpha-galactosyltransferase (A4GALT).